Consider the following 555-residue polypeptide: Inorganic phosphate transporter 1-11 (555 aa).

Over 1 to 28 (MADADGGSNLAVLDALDSARTQMYHMKA) the chain is Cytoplasmic. A helical membrane pass occupies residues 29–49 (IVIAGMGFFTDAYDLFCISTV). The Extracellular segment spans residues 50 to 77 (SKLLGRLYYQPDGSTDSKPGALSKTANN). The helical transmembrane segment at 78–98 (MVIGVALVGTLMGQLVFGYFG) threads the bilayer. The Cytoplasmic portion of the chain corresponds to 99–105 (DKLGRKR). A helical membrane pass occupies residues 106–126 (VYGVTLILMAACAIGSGLSFG). The Extracellular portion of the chain corresponds to 127-130 (SSRK). The chain crosses the membrane as a helical span at residues 131–151 (AVIGTLCFFRFWLGFGIGGDY). Residues 152 to 167 (PLSATIMSEYSNKKTR) are Cytoplasmic-facing. The helical transmembrane segment at 168 to 188 (GAFIAAVFAMQGVGIIFAGLV) threads the bilayer. The Extracellular portion of the chain corresponds to 189–216 (SMIVSSIFLTYNKAPSYKGNHDLSRQMP). A helical membrane pass occupies residues 217-237 (AADYVWRIVLMIGAFPALATF). The Cytoplasmic portion of the chain corresponds to 238 to 298 (YWRMKMPETA…PLLSMEFARR (61 aa)). Residues 299 to 319 (HGLHLIGTTTTWFLLDIAFYS) form a helical membrane-spanning segment. Over 320–351 (QNLTQKDIFPAMGLISGAAEVNALTEMFQISK) the chain is Extracellular. Residues 352–372 (ASFLVALLGTFPGYWVTVALI) traverse the membrane as a helical segment. The Cytoplasmic segment spans residues 373–377 (DKMGR). The chain crosses the membrane as a helical span at residues 378-398 (YMIQLIGFFMMSMFMLAMGIL). Residues 399 to 408 (YDYLKTHHFL) are Extracellular-facing. A helical membrane pass occupies residues 409-436 (FGLLYALTFFFANFGPNSTTFVLPAELF). Residues 437–442 (PTRVRS) are Cytoplasmic-facing. Residues 443 to 463 (TCHAISAAAGKAGAIVAAFGI) form a helical membrane-spanning segment. Over 464-477 (QKLTYNSQVKSIKK) the chain is Extracellular. The helical transmembrane segment at 478 to 498 (ALIILSITNMLGFFFTFLVPE) threads the bilayer. The Cytoplasmic segment spans residues 499–555 (TMGRSLEEISGEDGNTGAGGGGAPAAANAGVGVSASDVSRDEKFPASSTEWQTSMHA). Residues 506–555 (EISGEDGNTGAGGGGAPAAANAGVGVSASDVSRDEKFPASSTEWQTSMHA) form a disordered region. Positions 512-521 (GNTGAGGGGA) are enriched in gly residues. Low complexity predominate over residues 522-535 (PAAANAGVGVSASD). Residues 544 to 555 (ASSTEWQTSMHA) show a composition bias toward polar residues.

Belongs to the major facilitator superfamily. Phosphate:H(+) symporter (TC 2.A.1.9) family.

It localises to the membrane. Symbiosis-specific regulated inorganic phosphate (Pi) transporter. Probably involved in symbiosis-mediated Pi uptake in roots colonized by myccorhizal fungi. The sequence is that of Inorganic phosphate transporter 1-11 (PHT1-11) from Oryza sativa subsp. japonica (Rice).